The following is a 1940-amino-acid chain: Protein ORF1940 (1940 aa).

TPR repeat units follow at residues 119-153, 155-186, 480-513, and 617-652; these read IKAC…ALQY, FQSL…LQQI, RLPD…GLHG, and GKSM…SPTS. 2 disordered regions span residues 1160 to 1239 and 1519 to 1571; these read PSKV…PGAV and KGPS…TVTS. A compositionally biased stretch (low complexity) spans 1164–1185; it reads QNTTQPSATQNTTTQPTAQNTS. Residues 1186–1200 are compositionally biased toward polar residues; sequence LPGATQNTTLPTPSK. Low complexity-rich tracts occupy residues 1201–1235, 1521–1539, and 1561–1571; these read VQNT…NTSL, PSTT…MTPP, and TPGSGSQTVTS. One copy of the TPR 5 repeat lies at 1691-1724; the sequence is KDLNKSVGTSVVEEAKYNSTLQTYLAGLGIKDLN. The tract at residues 1862-1940 is disordered; the sequence is TTTHHITPPP…AEQAEQVLLI (79 aa). The span at 1868 to 1883 shows a compositional bias: pro residues; that stretch reads TPPPPPPPPPPPPPPK. The span at 1884-1894 shows a compositional bias: low complexity; it reads TQTITTTTQIT. Over residues 1895–1912 the composition is skewed to pro residues; the sequence is PPSPPPTPPPPPPPPKSP.

This is Protein ORF1940 from Acidianus convivator (ATV).